Here is a 349-residue protein sequence, read N- to C-terminus: Aquaporin-4 (349 aa).

Helical transmembrane passes span 92 to 112 (LSESLAMFFFMSLLLGCAATA) and 125 to 147 (AFYHGFSIIFAIYVAGGISGGLL). An NPA 1 motif is present at residues 148–150 (NPA). A helical membrane pass occupies residues 167 to 187 (LIYMSAQYFGAFIASAVVYLI). 2 N-linked (GlcNAc...) asparagine glycosylation sites follow: asparagine 194 and asparagine 207. Transmembrane regions (helical) follow at residues 225–245 (GAIFNQIFCTMLLTIGFLSIC) and 256–276 (MFPFAVGMLIMTVFLAFSYSA). An NPA 2 motif is present at residues 281–283 (NPA). Residues 314–334 (WLFPYVGALLGGVIYEIFIGI) form a helical membrane-spanning segment.

It belongs to the MIP/aquaporin (TC 1.A.8) family.

It is found in the cell membrane. Its function is as follows. Aquaglyceroporin that may modulate the water content and osmolytes during anhydrobiosis. The protein is Aquaporin-4 of Milnesium tardigradum (Water bear).